Consider the following 200-residue polypeptide: Ribosome maturation factor RimM (200 aa).

In terms of domain architecture, PRC barrel spans 103-181 (KEGEYYFYQL…KIVAKRLEYL (79 aa)).

It belongs to the RimM family. In terms of assembly, binds ribosomal protein uS19.

It is found in the cytoplasm. An accessory protein needed during the final step in the assembly of 30S ribosomal subunit, possibly for assembly of the head region. Essential for efficient processing of 16S rRNA. May be needed both before and after RbfA during the maturation of 16S rRNA. It has affinity for free ribosomal 30S subunits but not for 70S ribosomes. The polypeptide is Ribosome maturation factor RimM (Kosmotoga olearia (strain ATCC BAA-1733 / DSM 21960 / TBF 19.5.1)).